The chain runs to 517 residues: Nicotine N-demethylase CYP82E4 (517 aa).

Residues 2 to 22 traverse the membrane as a helical segment; the sequence is VFPIEAIVGLVTFTFLFFFLW. A Glycyl lysine isopeptide (Lys-Gly) (interchain with G-Cter in ubiquitin) cross-link involves residue Lys254. Cys457 lines the heme pocket.

This sequence belongs to the cytochrome P450 family. CYP82E2 subfamily. The cofactor is heme. As to expression, expressed at low levels in green leaves.

Its subcellular location is the membrane. It catalyses the reaction (S)-nicotine + reduced [NADPH--hemoprotein reductase] + O2 = (S)-nornicotine + formaldehyde + oxidized [NADPH--hemoprotein reductase] + H2O + H(+). The protein operates within alkaloid biosynthesis; nicotine biosynthesis. In terms of biological role, involved in the biosynthesis of pyridine alkaloid natural products, leading mainly to the production of anabasine, anatabine, nicotine and nornicotine, effective deterrents against herbivores with antiparasitic and pesticide properties (neurotoxins); nornicotine serves as the precursor in the synthesis of the carcinogen compound N'-nitrosonornicotine (NNN). Catalyzes the demethylation of nicotine to form nornicotine. This Nicotiana tabacum (Common tobacco) protein is Nicotine N-demethylase CYP82E4.